The sequence spans 76 residues: uncharacterized protein (76 aa).

2 EF-hand domains span residues 9 to 44 (EMDEEAEEAFDLFDVTHKGYIDFEDLRRSCAQLGEN) and 43 to 76 (ENLTKEQLQLMLDLAGTNGKVSREEFAELWIHIS).

It localises to the cytoplasm. The protein localises to the nucleus. This is an uncharacterized protein from Schizosaccharomyces pombe (strain 972 / ATCC 24843) (Fission yeast).